The primary structure comprises 241 residues: DnaJ homolog subfamily C member 4 (241 aa).

A J domain is found at 34–99; that stretch reads TYYELLGVHP…QSRRSYDDQL (66 aa). Residues 88 to 99 are compositionally biased toward basic and acidic residues; that stretch reads REQSRRSYDDQL. Residues 88 to 129 form a disordered region; that stretch reads REQSRRSYDDQLRSGSPPKSPRTTVHDKSAHQTHSSWTPPNA. Residues 119–129 are compositionally biased toward polar residues; it reads QTHSSWTPPNA. Residues 156 to 175 traverse the membrane as a helical segment; sequence VLGYCLLLMLAGMGLHYIAF. Positions 212-241 are disordered; that stretch reads QQERQRLGQRQPPPSEPTQGPEIVPRGAGP.

The protein resides in the membrane. The sequence is that of DnaJ homolog subfamily C member 4 (DNAJC4) from Homo sapiens (Human).